Reading from the N-terminus, the 442-residue chain is MKEQKKVFIKTLGCQMNEYDSARMHEVLNEHFDTVKTDDYKDADIILINTCSIREKAQEKVFHELGRWKGLKKTNEDLIIGVGGCVASQEGENIIKRAPFVDLVFGPQTIHRLPEMIKQKQKSQQSQVDISFPEVEKFDYLPEPKAEGAKAYVSIMEGCDKYCSYCVVPYTRGPEVNRPFEDVLAECAILAEQGVKEITLLGQNVNHYLGPMENGQTADLALLIHFIAEIDGIERIRFTTSHPVEFSQNLIDAYATVPELANHLHLPVQHGSDRILINMKRNHTILEFKQKIRKLRAIRPDITISSDFIVGFPGETEEDFQKLLDLVKEINFDQSFSFIYSKRPGTPAADLPDDTPMEVKKDRLKRLQDLLNSNAQIISRQMVGTNQRILVDGTSKKDDNILSGRTENNRVVNFKGDKSLIGQFAMVKITESLPNSLRGELI.

The region spanning 5 to 122 (KKVFIKTLGC…LPEMIKQKQK (118 aa)) is the MTTase N-terminal domain. Residues Cys-14, Cys-51, Cys-85, Cys-159, Cys-163, and Cys-166 each coordinate [4Fe-4S] cluster. Positions 145-378 (KAEGAKAYVS…DLLNSNAQII (234 aa)) constitute a Radical SAM core domain. Residues 380–442 (RQMVGTNQRI…LPNSLRGELI (63 aa)) enclose the TRAM domain.

It belongs to the methylthiotransferase family. MiaB subfamily. Monomer. [4Fe-4S] cluster is required as a cofactor.

It localises to the cytoplasm. The enzyme catalyses N(6)-dimethylallyladenosine(37) in tRNA + (sulfur carrier)-SH + AH2 + 2 S-adenosyl-L-methionine = 2-methylsulfanyl-N(6)-dimethylallyladenosine(37) in tRNA + (sulfur carrier)-H + 5'-deoxyadenosine + L-methionine + A + S-adenosyl-L-homocysteine + 2 H(+). Catalyzes the methylthiolation of N6-(dimethylallyl)adenosine (i(6)A), leading to the formation of 2-methylthio-N6-(dimethylallyl)adenosine (ms(2)i(6)A) at position 37 in tRNAs that read codons beginning with uridine. This is tRNA-2-methylthio-N(6)-dimethylallyladenosine synthase from Francisella tularensis subsp. holarctica (strain FTNF002-00 / FTA).